The chain runs to 291 residues: 33 kDa chaperonin (291 aa).

Intrachain disulfides connect Cys235–Cys237 and Cys268–Cys271.

This sequence belongs to the HSP33 family. In terms of processing, under oxidizing conditions two disulfide bonds are formed involving the reactive cysteines. Under reducing conditions zinc is bound to the reactive cysteines and the protein is inactive.

The protein localises to the cytoplasm. Redox regulated molecular chaperone. Protects both thermally unfolding and oxidatively damaged proteins from irreversible aggregation. Plays an important role in the bacterial defense system toward oxidative stress. This is 33 kDa chaperonin from Streptococcus agalactiae serotype Ia (strain ATCC 27591 / A909 / CDC SS700).